Here is a 478-residue protein sequence, read N- to C-terminus: Ninja-family protein 8 (478 aa).

Disordered regions lie at residues 1–247 (MDDD…LTPG), 337–374 (FTAK…EKKA), and 454–478 (DAPA…SAEN). Basic and acidic residues predominate over residues 23-35 (KARDAPLEPKAEP). Positions 169-179 (ISISTDDGSTG) are enriched in polar residues. Over residues 180–189 (ENEDVAESEA) the composition is skewed to acidic residues. Positions 233–242 (SFSGSESSSG) are enriched in low complexity. The segment covering 339 to 358 (AKDKADQTGTKQVDDGKKPQ) has biased composition (basic and acidic residues).

It belongs to the Ninja family.

The protein resides in the nucleus. The sequence is that of Ninja-family protein 8 from Zea mays (Maize).